A 200-amino-acid polypeptide reads, in one-letter code: UPF0301 protein BOV_0485 (200 aa).

The protein belongs to the UPF0301 (AlgH) family.

The sequence is that of UPF0301 protein BOV_0485 from Brucella ovis (strain ATCC 25840 / 63/290 / NCTC 10512).